A 739-amino-acid chain; its full sequence is tRNA 5-methylaminomethyl-2-thiouridine biosynthesis bifunctional protein MnmC (739 aa).

The interval 1 to 282 is tRNA (mnm(5)s(2)U34)-methyltransferase; that stretch reads MDKVTPAKLS…KREMLTATKL (282 aa). The FAD-dependent cmnm(5)s(2)U34 oxidoreductase stretch occupies residues 330-739; sequence IGAGVCGLMA…HRSSLKKPLS (410 aa).

This sequence in the N-terminal section; belongs to the methyltransferase superfamily. tRNA (mnm(5)s(2)U34)-methyltransferase family. It in the C-terminal section; belongs to the DAO family. FAD serves as cofactor.

Its subcellular location is the cytoplasm. It catalyses the reaction 5-aminomethyl-2-thiouridine(34) in tRNA + S-adenosyl-L-methionine = 5-methylaminomethyl-2-thiouridine(34) in tRNA + S-adenosyl-L-homocysteine + H(+). Catalyzes the last two steps in the biosynthesis of 5-methylaminomethyl-2-thiouridine (mnm(5)s(2)U) at the wobble position (U34) in tRNA. Catalyzes the FAD-dependent demodification of cmnm(5)s(2)U34 to nm(5)s(2)U34, followed by the transfer of a methyl group from S-adenosyl-L-methionine to nm(5)s(2)U34, to form mnm(5)s(2)U34. In Psychrobacter sp. (strain PRwf-1), this protein is tRNA 5-methylaminomethyl-2-thiouridine biosynthesis bifunctional protein MnmC.